We begin with the raw amino-acid sequence, 688 residues long: Zinc finger CCCH domain-containing protein 22 (688 aa).

The segment at 62–123 (ALLPPPPPPS…QPFSRSNGSV (62 aa)) is disordered. Low complexity predominate over residues 101–117 (PLSASSPSSWAQAQPFS). A C3H1-type zinc finger spans residues 233-260 (GFGWKPCLYYARGFCKNGSSCRFVHGDD). Positions 366-442 (RQIYLTFPAD…RVLVKPYKEK (77 aa)) constitute an RRM domain. A coiled-coil region spans residues 487 to 522 (TNEMMLRRKLEEQQQAAELQQAIELHSRRLMDLQLL). Positions 552–624 (LATTMVESPP…PTKSSVSAHQ (73 aa)) are disordered. Positions 574 to 589 (TEERKMVNGGGDKEES) are enriched in basic and acidic residues. Over residues 613–624 (ASPTKSSVSAHQ) the composition is skewed to polar residues.

In Oryza sativa subsp. japonica (Rice), this protein is Zinc finger CCCH domain-containing protein 22.